A 361-amino-acid polypeptide reads, in one-letter code: S-adenosylmethionine decarboxylase proenzyme (361 aa).

Catalysis depends on residues glutamate 13 and glutamate 16. Serine 73 serves as the catalytic Schiff-base intermediate with substrate; via pyruvic acid. Serine 73 is modified (pyruvic acid (Ser); by autocatalysis). The Proton donor; for catalytic activity role is filled by cysteine 87. Residues serine 236 and histidine 249 each act as proton acceptor; for processing activity in the active site.

This sequence belongs to the eukaryotic AdoMetDC family. Pyruvate is required as a cofactor. Is synthesized initially as an inactive proenzyme. Formation of the active enzyme involves a self-maturation process in which the active site pyruvoyl group is generated from an internal serine residue via an autocatalytic post-translational modification. Two non-identical subunits are generated from the proenzyme in this reaction, and the pyruvate is formed at the N-terminus of the alpha chain, which is derived from the carboxyl end of the proenzyme. The post-translation cleavage follows an unusual pathway, termed non-hydrolytic serinolysis, in which the side chain hydroxyl group of the serine supplies its oxygen atom to form the C-terminus of the beta chain, while the remainder of the serine residue undergoes an oxidative deamination to produce ammonia and the pyruvoyl group blocking the N-terminus of the alpha chain.

It catalyses the reaction S-adenosyl-L-methionine + H(+) = S-adenosyl 3-(methylsulfanyl)propylamine + CO2. The protein operates within amine and polyamine biosynthesis; S-adenosylmethioninamine biosynthesis; S-adenosylmethioninamine from S-adenosyl-L-methionine: step 1/1. This Nicotiana tabacum (Common tobacco) protein is S-adenosylmethionine decarboxylase proenzyme (SAMDC).